A 526-amino-acid chain; its full sequence is Trigger factor (526 aa).

Residues Gly162–Pro243 form the PPIase FKBP-type domain. A compositionally biased stretch (basic and acidic residues) spans Asp425–Lys460. The disordered stretch occupies residues Asp425 to Asp526. A compositionally biased stretch (basic residues) spans Lys461–Ala517.

This sequence belongs to the FKBP-type PPIase family. Tig subfamily.

The protein localises to the cytoplasm. The enzyme catalyses [protein]-peptidylproline (omega=180) = [protein]-peptidylproline (omega=0). Functionally, involved in protein export. Acts as a chaperone by maintaining the newly synthesized protein in an open conformation. Functions as a peptidyl-prolyl cis-trans isomerase. In Corynebacterium jeikeium (strain K411), this protein is Trigger factor.